The chain runs to 1049 residues: Self-sufficient cytochrome P450 monooxygenase CYP505E4 (1049 aa).

A heme-binding site is contributed by cysteine 405. The interval 462–492 (ATALSQHNMSAGATSSPGSSAHPAGNKNAQD) is disordered. The span at 471–486 (SAGATSSPGSSAHPAG) shows a compositional bias: low complexity. The Flavodoxin-like domain maps to 499-640 (ISFFYGSNSG…DLEVWEETNL (142 aa)). Residues 505–509 (SNSGT) and 584–616 (VFGCGHQDWTKTFYRIPILIDDLMHKAGATRLT) contribute to the FMN site. The FAD-binding FR-type domain maps to 678-906 (RDLIEGKVTA…RPAKEAFHLP (229 aa)).

It in the N-terminal section; belongs to the cytochrome P450 family. Requires FAD as cofactor. It depends on FMN as a cofactor. The cofactor is heme.

The enzyme catalyses 2 oxidized [cytochrome P450] + NADPH = 2 reduced [cytochrome P450] + NADP(+) + H(+). It catalyses the reaction an organic molecule + reduced [NADPH--hemoprotein reductase] + O2 = an alcohol + oxidized [NADPH--hemoprotein reductase] + H2O + H(+). It carries out the reaction dodecanoate + reduced [NADPH--hemoprotein reductase] + O2 = 5-hydroxydodecanoate + oxidized [NADPH--hemoprotein reductase] + H2O + H(+). The catalysed reaction is tetradecanoate + reduced [NADPH--hemoprotein reductase] + O2 = 7-hydroxytetradecanoate + oxidized [NADPH--hemoprotein reductase] + H2O + H(+). The enzyme catalyses dodecan-1-ol + reduced [NADPH--hemoprotein reductase] + O2 = 1,5-dodecanediol + oxidized [NADPH--hemoprotein reductase] + H2O + H(+). It catalyses the reaction dodecan-1-ol + reduced [NADPH--hemoprotein reductase] + O2 = 1,4-dodecanediol + oxidized [NADPH--hemoprotein reductase] + H2O + H(+). It carries out the reaction dodecan-1-ol + reduced [NADPH--hemoprotein reductase] + O2 = 1,6-dodecanediol + oxidized [NADPH--hemoprotein reductase] + H2O + H(+). In terms of biological role, self-sufficient cytochrome P450 monooxygenase that catalyzes the regioselective in-chain hydroxylation of alkanes, fatty alcohols, and fatty acids at the omega-7 position. Performs hydroxylation of C10-C16 n-alkanes and C12 and C14 fatty alcohols; and thereby enables the one step biocatalytic synthesis of rare alcohols such as 5-dodecanol and 7-tetradecanol. Converts 1-dodecanol into 1,5-dodecanediol as major product with very little sub-terminally hydroxylated products with the 1,4-dodecanediol and 1,6-dodecanediol more abundant. Converts dodecanoic acid to 5-hydroxydodecanoic acid which can be further converted into delta-dodecalactone by lactonization of the 5-hydroxy acid at low pH. Also gives sub-terminal hydroxylation of dodecanoic acid with 9-hydroxydodecanoic acid being the second most abundant product. The polypeptide is Self-sufficient cytochrome P450 monooxygenase CYP505E4 (Penicillium freii).